Consider the following 440-residue polypeptide: 3-phosphoshikimate 1-carboxyvinyltransferase (440 aa).

3-phosphoshikimate is bound by residues K25, S26, and R30. Residue K25 participates in phosphoenolpyruvate binding. Residues G96 and R124 each coordinate phosphoenolpyruvate. 3-phosphoshikimate is bound by residues S168, Q169, D310, and K337. Q169 is a phosphoenolpyruvate binding site. Catalysis depends on D310, which acts as the Proton acceptor. R341, R382, and K409 together coordinate phosphoenolpyruvate.

Belongs to the EPSP synthase family. In terms of assembly, monomer.

It localises to the cytoplasm. It carries out the reaction 3-phosphoshikimate + phosphoenolpyruvate = 5-O-(1-carboxyvinyl)-3-phosphoshikimate + phosphate. The protein operates within metabolic intermediate biosynthesis; chorismate biosynthesis; chorismate from D-erythrose 4-phosphate and phosphoenolpyruvate: step 6/7. Its function is as follows. Catalyzes the transfer of the enolpyruvyl moiety of phosphoenolpyruvate (PEP) to the 5-hydroxyl of shikimate-3-phosphate (S3P) to produce enolpyruvyl shikimate-3-phosphate and inorganic phosphate. In Chlamydia trachomatis serovar L2 (strain ATCC VR-902B / DSM 19102 / 434/Bu), this protein is 3-phosphoshikimate 1-carboxyvinyltransferase.